Here is a 1755-residue protein sequence, read N- to C-terminus: Transposon Ty1-DR6 Gag-Pol polyprotein (1755 aa).

Composition is skewed to polar residues over residues 1-23 (MESQ…SVTS), 48-60 (TKAN…TPAS), and 127-152 (QSQF…GNTF). 3 disordered regions span residues 1–93 (MESQ…MMTQ), 126–174 (PQSQ…PPPM), and 352–421 (GSRN…SKST). The segment covering 153–165 (TDSSSADSDMTST) has biased composition (low complexity). Residues 299 to 401 (NNGIHINNKV…NSKSKTARAH (103 aa)) form an RNA-binding region. The segment covering 402–418 (NVSTSNNSPSTDNDSIS) has biased composition (low complexity). Phosphoserine is present on S416. The For protease activity; shared with dimeric partner role is filled by D461. Positions 583–640 (NVHTSESTRKYPYPFIHRMLAHANAQTIRYSLKNNTITYFNESDVDWSSAIDYQCPDC) are integrase-type zinc finger-like. The 176-residue stretch at 660 to 835 (NSYEPFQYLH…AGLDISTLLP (176 aa)) folds into the Integrase catalytic domain. Positions 671 and 736 each coordinate Mg(2+). 3 disordered regions span residues 956-1087 (SKAV…ETEK), 1092-1111 (RSPS…NIVP), and 1130-1187 (DLPL…DNET). The span at 960–969 (SPTDSTPPST) shows a compositional bias: low complexity. Residues 1005 to 1015 (STPQISNIEST) are compositionally biased toward polar residues. A compositionally biased stretch (basic and acidic residues) spans 1038–1053 (ESSHASKSKDFRHSDS). Composition is skewed to polar residues over residues 1054 to 1082 (YSEN…QISD) and 1101 to 1111 (PENNSSHNIVP). The Bipartite nuclear localization signal signature appears at 1178–1212 (KKRSLEDNETEIKVSRDTWNTKNMRSLEPPRSKKR). Residues 1338-1476 (NNYYITQLDI…DILGLEIKYQ (139 aa)) form the Reverse transcriptase Ty1/copia-type domain. Mg(2+)-binding residues include D1346, D1427, D1428, D1610, E1652, and D1685. Residues 1610–1752 (DASYGNQPYY…IKTFKLLTNK (143 aa)) enclose the RNase H Ty1/copia-type domain.

In terms of assembly, the capsid protein forms a homotrimer, from which the VLPs are assembled. The protease is a homodimer, whose active site consists of two apposed aspartic acid residues. Post-translationally, initially, virus-like particles (VLPs) are composed of the structural unprocessed proteins Gag and Gag-Pol, and also contain the host initiator methionine tRNA (tRNA(i)-Met) which serves as a primer for minus-strand DNA synthesis, and a dimer of genomic Ty RNA. Processing of the polyproteins occurs within the particle and proceeds by an ordered pathway, called maturation. First, the protease (PR) is released by autocatalytic cleavage of the Gag-Pol polyprotein yielding capsid protein p45 and a Pol-p154 precursor protein. This cleavage is a prerequisite for subsequent processing of Pol-p154 at the remaining sites to release the mature structural and catalytic proteins. Maturation takes place prior to the RT reaction and is required to produce transposition-competent VLPs.

The protein localises to the cytoplasm. It localises to the nucleus. It catalyses the reaction DNA(n) + a 2'-deoxyribonucleoside 5'-triphosphate = DNA(n+1) + diphosphate. The catalysed reaction is Endonucleolytic cleavage to 5'-phosphomonoester.. Its function is as follows. Capsid protein (CA) is the structural component of the virus-like particle (VLP), forming the shell that encapsulates the retrotransposons dimeric RNA genome. The particles are assembled from trimer-clustered units and there are holes in the capsid shells that allow for the diffusion of macromolecules. CA also has nucleocapsid-like chaperone activity, promoting primer tRNA(i)-Met annealing to the multipartite primer-binding site (PBS), dimerization of Ty1 RNA and initiation of reverse transcription. The aspartyl protease (PR) mediates the proteolytic cleavages of the Gag and Gag-Pol polyproteins after assembly of the VLP. In terms of biological role, reverse transcriptase/ribonuclease H (RT) is a multifunctional enzyme that catalyzes the conversion of the retro-elements RNA genome into dsDNA within the VLP. The enzyme displays a DNA polymerase activity that can copy either DNA or RNA templates, and a ribonuclease H (RNase H) activity that cleaves the RNA strand of RNA-DNA heteroduplexes during plus-strand synthesis and hydrolyzes RNA primers. The conversion leads to a linear dsDNA copy of the retrotransposon that includes long terminal repeats (LTRs) at both ends. Functionally, integrase (IN) targets the VLP to the nucleus, where a subparticle preintegration complex (PIC) containing at least integrase and the newly synthesized dsDNA copy of the retrotransposon must transit the nuclear membrane. Once in the nucleus, integrase performs the integration of the dsDNA into the host genome. The protein is Transposon Ty1-DR6 Gag-Pol polyprotein (TY1B-DR6) of Saccharomyces cerevisiae (strain ATCC 204508 / S288c) (Baker's yeast).